A 240-amino-acid chain; its full sequence is Uridylate kinase (240 aa).

12–15 (KLSG) lines the ATP pocket. The segment at 20–25 (GEKGFG) is involved in allosteric activation by GTP. Glycine 54 provides a ligand contact to UMP. ATP contacts are provided by glycine 55 and arginine 59. Residues aspartate 74 and 135 to 142 (TGSPYFST) each bind UMP. Asparagine 163, tyrosine 169, and aspartate 172 together coordinate ATP.

This sequence belongs to the UMP kinase family. Homohexamer.

The protein resides in the cytoplasm. It catalyses the reaction UMP + ATP = UDP + ADP. It participates in pyrimidine metabolism; CTP biosynthesis via de novo pathway; UDP from UMP (UMPK route): step 1/1. Allosterically activated by GTP. Inhibited by UTP. Catalyzes the reversible phosphorylation of UMP to UDP. The chain is Uridylate kinase from Limosilactobacillus reuteri (Lactobacillus reuteri).